A 429-amino-acid polypeptide reads, in one-letter code: 26S proteasome regulatory subunit 6A homolog (429 aa).

Residues 1-21 (MSSPPPAAAAAMAVDDADDDQ) form a disordered region. ATP is bound at residue 217–224 (GPPGTGKT).

It belongs to the AAA ATPase family.

The protein localises to the cytoplasm. The protein resides in the nucleus. In terms of biological role, the 26S proteasome is involved in the ATP-dependent degradation of ubiquitinated proteins. The regulatory (or ATPase) complex confers ATP dependency and substrate specificity to the 26S complex. The polypeptide is 26S proteasome regulatory subunit 6A homolog (TBP1) (Oryza sativa subsp. japonica (Rice)).